The chain runs to 563 residues: Chitinase A (563 aa).

A signal peptide spans Met1 to Ala23. Residues Lys158–Ser559 form the GH18 domain. Glu315 (proton donor) is an active-site residue.

Belongs to the glycosyl hydrolase 18 family. Chitinase class II subfamily.

It catalyses the reaction Random endo-hydrolysis of N-acetyl-beta-D-glucosaminide (1-&gt;4)-beta-linkages in chitin and chitodextrins.. In Serratia marcescens, this protein is Chitinase A (chiA).